Consider the following 338-residue polypeptide: MNLQRFPRYPLTFGPTPIQPLKRLSEHLGGKVELYAKREDCNSGLAFGGNKTRKLEYLVPDALEQGADTLVSIGGVQSNQTRQVAAVAAHLGMKCVLVQEHWVNYEDPVYDRVGNIQLSRMMGADVRLVSDGFDIGIRRSWEEAMESVRQAGGKPYPIPAGCSEHPLGGLGFVGFAEEVRAQEAQLGFKFDYIVVCSVTGSTQAGMVVGFAADGRANRVIGIDASATPERTHEQITRIARHTAELVDLGRPITTADVVLDTRYAGPEYGLPNDGTLEAIRLCARLEGMLTDPVYEGKSMHGMIDKVQLGEFEPGSKVLYAHLGGVPALSAYHETFRNG.

N6-(pyridoxal phosphate)lysine is present on Lys-51. Ser-78 functions as the Nucleophile in the catalytic mechanism.

Belongs to the ACC deaminase/D-cysteine desulfhydrase family. In terms of assembly, homotrimer. Pyridoxal 5'-phosphate is required as a cofactor.

The enzyme catalyses 1-aminocyclopropane-1-carboxylate + H2O = 2-oxobutanoate + NH4(+). Catalyzes a cyclopropane ring-opening reaction, the irreversible conversion of 1-aminocyclopropane-1-carboxylate (ACC) to ammonia and alpha-ketobutyrate. Allows growth on ACC as a nitrogen source. The sequence is that of 1-aminocyclopropane-1-carboxylate deaminase from Burkholderia lata (strain ATCC 17760 / DSM 23089 / LMG 22485 / NCIMB 9086 / R18194 / 383).